The sequence spans 249 residues: Triosephosphate isomerase (249 aa).

Residue 9-11 (NWK) coordinates substrate. The active-site Electrophile is the His-94. The Proton acceptor role is filled by Glu-166. Substrate contacts are provided by residues Gly-172 and 232–233 (GG).

Belongs to the triosephosphate isomerase family. In terms of assembly, homodimer.

It is found in the cytoplasm. It carries out the reaction D-glyceraldehyde 3-phosphate = dihydroxyacetone phosphate. It functions in the pathway carbohydrate biosynthesis; gluconeogenesis. The protein operates within carbohydrate degradation; glycolysis; D-glyceraldehyde 3-phosphate from glycerone phosphate: step 1/1. Functionally, involved in the gluconeogenesis. Catalyzes stereospecifically the conversion of dihydroxyacetone phosphate (DHAP) to D-glyceraldehyde-3-phosphate (G3P). The polypeptide is Triosephosphate isomerase (Xylella fastidiosa (strain M12)).